The sequence spans 86 residues: Acyl carrier protein (86 aa).

Residues 7–85 (SKVDNIEQKV…DVVNYIKEHK (79 aa)) form the Carrier domain. The residue at position 45 (Ser-45) is an O-(pantetheine 4'-phosphoryl)serine.

This sequence belongs to the acyl carrier protein (ACP) family. 4'-phosphopantetheine is transferred from CoA to a specific serine of apo-ACP by AcpS. This modification is essential for activity because fatty acids are bound in thioester linkage to the sulfhydryl of the prosthetic group.

The protein resides in the cytoplasm. It participates in lipid metabolism; fatty acid biosynthesis. Functionally, carrier of the growing fatty acid chain in fatty acid biosynthesis. This Rickettsia bellii (strain RML369-C) protein is Acyl carrier protein.